The following is a 170-amino-acid chain: Myosin regulatory light chain 2, skeletal muscle isoform type 1 (170 aa).

The residue at position 2 (A2) is a N,N,N-trimethylalanine. S16 and S17 each carry phosphoserine. 2 positions are modified to phosphothreonine: T26 and T36. Positions 26-61 (TQIQEFKEAFTVIDQNRDGIIDKEDLRDTFAAMGRL) constitute an EF-hand 1 domain. Residues D39, N41, D43, and D50 each contribute to the Ca(2+) site. Phosphoserine is present on S76. 2 EF-hand domains span residues 96–131 (DPEDVITGAFKVLDPEGKGTIKKQFLEELLITQCDR) and 132–167 (FSQEEIKNMWAAFSPDVGGNVDYKNICYVITHGDAK). T102 is modified (phosphothreonine).

Myosin is a hexamer of 2 heavy chains and 4 light chains.

This is Myosin regulatory light chain 2, skeletal muscle isoform type 1 from Oryctolagus cuniculus (Rabbit).